The following is a 331-amino-acid chain: Glyceraldehyde-3-phosphate dehydrogenase, cytosolic (331 aa).

NAD(+)-binding positions include arginine 11–isoleucine 12, aspartate 33, and arginine 77. Residues serine 148–threonine 150, threonine 179, threonine 208–glycine 209, and arginine 231 each bind D-glyceraldehyde 3-phosphate. Residue cysteine 149 is the Nucleophile of the active site. Asparagine 313 is an NAD(+) binding site.

This sequence belongs to the glyceraldehyde-3-phosphate dehydrogenase family. Homotetramer.

Its subcellular location is the cytoplasm. It carries out the reaction D-glyceraldehyde 3-phosphate + phosphate + NAD(+) = (2R)-3-phospho-glyceroyl phosphate + NADH + H(+). It participates in carbohydrate degradation; glycolysis; pyruvate from D-glyceraldehyde 3-phosphate: step 1/5. The polypeptide is Glyceraldehyde-3-phosphate dehydrogenase, cytosolic (GAPC) (Leishmania mexicana).